A 2390-amino-acid chain; its full sequence is MSSTLSPTDFDSLEIQGQYSDINNRWDLPDSDWDNDSSSARLFERSRIKALADEREAVQKKTFTKWVNSHLARVTCRVGDLYSDLRDGRNLLRLLEVLSGEILPKPTKGRMRIHCLENVDKALQFLKEQKVHLENMGSHDIVDGNHRLTLGLVWTIILRFQIQDISVETEDNKEKKSAKDALLLWCQMKTAGYPNVNVHNFTTSWRDGLAFNAIVHKHRPDLLDFESLKKCNAHYNLQNAFNLAEKELGLTKLLDPEDVNVDQPDEKSIITYVATYYHYFSKMKALAVEGKRIGKVLDHAMEAERLVEKYESLASELLQWIEQTIVTLNDRQLANSLSGVQNQLQSFNSYRTVEKPPKFTEKGNLEVLLFTIQSKLRANNQKVYTPREGRLISDINKAWERLEKAEHERELALRTELIRQEKLEQLAARFDRKAAMRETWLSENQRLVSQDNFGLELAAVEAAVRKHEAIETDIVAYSGRVQAVDAVAAELAAERYHDIKRIAARQHNVARLWDFLRQMVAARRERLLLNLELQKVFQDLLYLMDWMEEMKGRLQSQDLGRHLAGVEDLLQLHELVEADIAVQAERVRAVSASALRFCNPGKEYRPCDPQLVSERVAKLEQSYEALCELAAARRARLEESRRLWRFLWEVGEAEAWVREQQHLLASADTGRDLTGALRLLNKHTALRGEMSGRLGPLKLTLEQGQQLVAEGHPGASQASARAAELQAQWERLEALAEERAQRLAQAASLYQFQADANDMEAWLVDALRLVSSPELGHDEFSTQALARQHRALEEEIRSHRPTLDALREQAAALPPTLSRTPEVQSRVPTLERHYEELQARAGERARALEAALALYTMLSEAGACGLWVEEKEQWLNGLALPERLEDLEVVQQRFETLEPEMNTLAAQITAVNDIAEQLLKANPPGKDRIVNTQEQLNHRWQQFRRLADGKKAALTSALSIQNYHLECTETQAWMREKTKVIESTQGLGNDLAGVLALQRKLAGTERDLEAIAARVGELTREANALAAGHPAQAVAINARLREVQTGWEDLRATMRRREESLGEARRLQDFLRSLDDFQAWLGRTQTAVASEEGPATLPEAEALLAQHAALRGEVERAQSEYSRLRALGEEVTRDQADPQCLFLRQRLEALGTGWEELGRMWESRQGRLAQAHGFQGFLRDARQAEGVLSSQEYVLSHTEMPGTLQAADAAIKKLEDFMSTMDANGERIHGLLEAGRQLVSEGNIHADKIREKADSIERRHKKNQDAAQQFLGRLRDNREQQHFLQDCHELKLWIDEKMLTAQDVSYDEARNLHTKWQKHQAFMAELAANKDWLDKVDKEGRELTLEKPELKALVSEKLRDLHRRWDELETTTQAKARSLFDANRAELFAQSCCALESWLESLQAQLHSDDYGKDLTSVNILLKKQQMLEWEMAVREKEVEAIQAQAKALAQEDQGAGEVERTSRAVEEKFRALCQPMRERCRRLQASREQHQFHRDVEDEILWVTERLPMASSMEHGKDLPSVQLLMKKNQTLQKEIQGHEPRIADLRERQRALGAAAAGPELAELQEMWKRLGHELELRGKRLEDALRAQQFYRDAAEAEAWMGEQELHMMGQEKAKDELSAQAEVKKHQVLEQALADYAQTIHQLAASSQDMIDHEHPESTRISIRQAQVDKLYAGLKELAGERRERLQEHLRLCQLRRELDDLEQWIQEREVVAASHELGQDYEHVTMLRDKFREFSRDTSTIGQERVDSANALANGLIAGGHAARATVAEWKDSLNEAWADLLELLDTRGQVLAAAYELQRFLHGARQALARVQHKQQQLPDGTGRDLNAAEALQRRHCAYEHDIQALSPQVQQVQDDGHRLQKAYAGDKAEEIGRHMQAVAEAWAQLQGSSAARRQLLLDTTDKFRFFKAVRELMLWMDEVNLQMDAQERPRDVSSADLVIKNQQGIKAEIEARADRFSSCIDMGKELLARSHYAAEEISEKLSQLQARRQETAEKWQEKMDWLQLVLEVLVFGRDAGMAEAWLCSQEPLVRSAELGCTVDEVESLIKRHEAFQKSAVAWEERFCALEKLTALEEREKERKRKREEEERRKQPPAPEPTASVPPGDLVGGQTASDTTWDGTQPRPPPSTQAPSVNGVCTDGEPSQPLLGQQRLEHSSFPEGPGPGSGDEANGPRGERQTRTRGPAPSAMPQSRSTESAHAATLPPRGPEPSAQEQMEGMLCRKQEMEAFGKKAANRSWQNVYCVLRRGSLGFYKDAKAASAGVPYHGEVPVSLARAQGSVAFDYRKRKHVFKLGLQDGKEYLFQAKDEAEMSSWLRVVNAAIATASSASGEPEEPVVPSTTRGMTRAMTMPPVSPVGAEGPVVLRSKDGREREREKRFSFFKKNK.

An N-acetylserine modification is found at serine 2. An actin-binding region spans residues serine 2 to histidine 278. Phosphoserine is present on residues serine 6 and serine 31. Calponin-homology (CH) domains are found at residues alanine 57 to glutamine 161 and lysine 176 to serine 281. Spectrin repeat units follow at residues leucine 306–arginine 414, alanine 427–leucine 527, glutamate 532–glutamate 639, arginine 642–alanine 744, leucine 749–glutamate 849, and tyrosine 855–leucine 954. The residue at position 959 (serine 959) is a Phosphoserine. Spectrin repeat units lie at residues isoleucine 960 to glutamate 1063, arginine 1066 to alanine 1169, phenylalanine 1174 to lysine 1262, glutamate 1279 to leucine 1379, arginine 1384 to glutamine 1485, glutamate 1489 to aspartate 1586, arginine 1589 to glutamate 1692, leucine 1696 to leucine 1797, tyrosine 1801 to leucine 1904, phenylalanine 1910 to glutamine 2010, and valine 2017 to threonine 2076. At serine 1073 the chain carries Phosphoserine. Basic and acidic residues predominate over residues arginine 2081 to lysine 2096. Disordered regions lie at residues arginine 2081 to glutamate 2222 and serine 2331 to lysine 2390. The span at glutamine 2116–glycine 2125 shows a compositional bias: polar residues. Residues serine 2171 and serine 2199 each carry the phosphoserine modification. One can recognise a PH domain in the interval glutamine 2218 to alanine 2328. Threonine 2354 carries the post-translational modification Phosphothreonine. Serine 2359 carries the phosphoserine modification. Residues arginine 2370–phenylalanine 2383 show a composition bias toward basic and acidic residues.

Belongs to the spectrin family. In terms of tissue distribution, highly expressed in brain, kidney, pancreas, and liver, and at lower levels in lung and placenta.

Its subcellular location is the cytoplasm. It localises to the cytoskeleton. The protein localises to the cell cortex. Its function is as follows. Probably plays an important role in neuronal membrane skeleton. The sequence is that of Spectrin beta chain, non-erythrocytic 2 (SPTBN2) from Homo sapiens (Human).